The following is a 545-amino-acid chain: ATP synthase F(1) complex subunit alpha, mitochondrial (545 aa).

ATP contacts are provided by glutamine 216, glycine 218, lysine 219, threonine 220, and serine 221. Threonine 220 lines the Mg(2+) pocket. Aspartate 304 serves as a coordination point for Mg(2+). ATP contacts are provided by glutamine 465 and glutamine 467.

Belongs to the ATPase alpha/beta chains family. In terms of assembly, homotrimer. Component of the ATP synthase complex composed at least of ATP5F1A/subunit alpha, ATP5F1B/subunit beta, ATP5MC1/subunit c (homooctomer), MT-ATP6/subunit a, MT-ATP8/subunit 8, ATP5ME/subunit e, ATP5MF/subunit f, ATP5MG/subunit g, ATP5MK/subunit k, ATP5MJ/subunit j, ATP5F1C/subunit gamma, ATP5F1D/subunit delta, ATP5F1E/subunit epsilon, ATP5PF/subunit F6, ATP5PB/subunit b, ATP5PD/subunit d, ATP5PO/subunit OSCP. ATP synthase complex consists of a soluble F(1) head domain (subunits alpha(3) and beta(3)) - the catalytic core - and a membrane F(0) domain - the membrane proton channel (subunits c, a, 8, e, f, g, k and j). These two domains are linked by a central stalk (subunits gamma, delta, and epsilon) rotating inside the F1 region and a stationary peripheral stalk (subunits F6, b, d, and OSCP).

Its subcellular location is the mitochondrion inner membrane. In terms of biological role, subunit alpha, of the mitochondrial membrane ATP synthase complex (F(1)F(0) ATP synthase or Complex V) that produces ATP from ADP in the presence of a proton gradient across the membrane which is generated by electron transport complexes of the respiratory chain. ATP synthase complex consist of a soluble F(1) head domain - the catalytic core - and a membrane F(1) domain - the membrane proton channel. These two domains are linked by a central stalk rotating inside the F(1) region and a stationary peripheral stalk. During catalysis, ATP synthesis in the catalytic domain of F(1) is coupled via a rotary mechanism of the central stalk subunits to proton translocation. In vivo, can only synthesize ATP although its ATP hydrolase activity can be activated artificially in vitro. With the catalytic subunit beta (ATP5F1B), forms the catalytic core in the F(1) domain. Subunit alpha does not bear the catalytic high-affinity ATP-binding sites. The protein is ATP synthase F(1) complex subunit alpha, mitochondrial of Xenopus laevis (African clawed frog).